Here is a 353-residue protein sequence, read N- to C-terminus: Photosystem II protein D1 (353 aa).

Threonine 2 is modified (N-acetylthreonine). Residue threonine 2 is modified to Phosphothreonine. The next 3 membrane-spanning stretches (helical) occupy residues 29–46 (YIGW…TATS), 118–133 (HFLL…EWEL), and 142–156 (WIAV…AATA). Chlorophyll a is bound at residue histidine 118. Pheophytin a is bound at residue tyrosine 126. [CaMn4O5] cluster contacts are provided by aspartate 170 and glutamate 189. Residues 197-218 (FHMLGVAGVFGGSLFSAMHGSL) form a helical membrane-spanning segment. Residue histidine 198 coordinates chlorophyll a. Residues histidine 215 and 264–265 (SF) each bind a quinone. Residue histidine 215 coordinates Fe cation. Residue histidine 272 participates in Fe cation binding. Residues 274–288 (FLAAWPVIGIWFTAL) form a helical membrane-spanning segment. [CaMn4O5] cluster-binding residues include histidine 332, glutamate 333, aspartate 342, and alanine 344. Positions 345-353 (SVEAPSVNG) are excised as a propeptide.

Belongs to the reaction center PufL/M/PsbA/D family. PSII is composed of 1 copy each of membrane proteins PsbA, PsbB, PsbC, PsbD, PsbE, PsbF, PsbH, PsbI, PsbJ, PsbK, PsbL, PsbM, PsbT, PsbX, PsbY, PsbZ, Psb30/Ycf12, at least 3 peripheral proteins of the oxygen-evolving complex and a large number of cofactors. It forms dimeric complexes. Requires The D1/D2 heterodimer binds P680, chlorophylls that are the primary electron donor of PSII, and subsequent electron acceptors. It shares a non-heme iron and each subunit binds pheophytin, quinone, additional chlorophylls, carotenoids and lipids. D1 provides most of the ligands for the Mn4-Ca-O5 cluster of the oxygen-evolving complex (OEC). There is also a Cl(-1) ion associated with D1 and D2, which is required for oxygen evolution. The PSII complex binds additional chlorophylls, carotenoids and specific lipids. as cofactor. Post-translationally, tyr-161 forms a radical intermediate that is referred to as redox-active TyrZ, YZ or Y-Z. In terms of processing, C-terminally processed by CTPA; processing is essential to allow assembly of the oxygen-evolving complex and thus photosynthetic growth.

The protein resides in the plastid. Its subcellular location is the chloroplast thylakoid membrane. The enzyme catalyses 2 a plastoquinone + 4 hnu + 2 H2O = 2 a plastoquinol + O2. Functionally, photosystem II (PSII) is a light-driven water:plastoquinone oxidoreductase that uses light energy to abstract electrons from H(2)O, generating O(2) and a proton gradient subsequently used for ATP formation. It consists of a core antenna complex that captures photons, and an electron transfer chain that converts photonic excitation into a charge separation. The D1/D2 (PsbA/PsbD) reaction center heterodimer binds P680, the primary electron donor of PSII as well as several subsequent electron acceptors. The protein is Photosystem II protein D1 of Chlorokybus atmophyticus (Soil alga).